The following is a 156-amino-acid chain: Small ribosomal subunit protein uS7 (156 aa).

This sequence belongs to the universal ribosomal protein uS7 family. In terms of assembly, part of the 30S ribosomal subunit. Contacts proteins S9 and S11.

In terms of biological role, one of the primary rRNA binding proteins, it binds directly to 16S rRNA where it nucleates assembly of the head domain of the 30S subunit. Is located at the subunit interface close to the decoding center, probably blocks exit of the E-site tRNA. This chain is Small ribosomal subunit protein uS7, found in Ruminiclostridium cellulolyticum (strain ATCC 35319 / DSM 5812 / JCM 6584 / H10) (Clostridium cellulolyticum).